A 491-amino-acid polypeptide reads, in one-letter code: Probable protein phosphatase 2C 6 (491 aa).

Residues 1–16 (MGLCHSKIDKTTRKET) show a composition bias toward basic and acidic residues. The segment at 1–39 (MGLCHSKIDKTTRKETGATSTATTTVERQSSGRLRRPRD) is disordered. Residues 17 to 28 (GATSTATTTVER) are compositionally biased toward low complexity. The PPM-type phosphatase domain occupies 64 to 376 (IACLYTQQGK…DDCAVVCLFL (313 aa)). Mn(2+)-binding residues include aspartate 100, glycine 101, aspartate 321, and aspartate 367. Residues 391–422 (VNHSHEESTESVTITSSKDADKKEEASTETNE) are disordered.

Belongs to the PP2C family. Requires Mg(2+) as cofactor. It depends on Mn(2+) as a cofactor.

It carries out the reaction O-phospho-L-seryl-[protein] + H2O = L-seryl-[protein] + phosphate. It catalyses the reaction O-phospho-L-threonyl-[protein] + H2O = L-threonyl-[protein] + phosphate. The protein is Probable protein phosphatase 2C 6 of Arabidopsis thaliana (Mouse-ear cress).